A 463-amino-acid chain; its full sequence is L-seryl-tRNA(Sec) selenium transferase (463 aa).

K295 carries the N6-(pyridoxal phosphate)lysine modification.

Belongs to the SelA family. As to quaternary structure, homodecamer; pentamer of dimers. Binds only one seryl-tRNA(Sec) per dimer. Pyridoxal 5'-phosphate serves as cofactor.

Its subcellular location is the cytoplasm. It carries out the reaction L-seryl-tRNA(Sec) + selenophosphate + H(+) = L-selenocysteinyl-tRNA(Sec) + phosphate. Its pathway is aminoacyl-tRNA biosynthesis; selenocysteinyl-tRNA(Sec) biosynthesis; selenocysteinyl-tRNA(Sec) from L-seryl-tRNA(Sec) (bacterial route): step 1/1. Converts seryl-tRNA(Sec) to selenocysteinyl-tRNA(Sec) required for selenoprotein biosynthesis. The chain is L-seryl-tRNA(Sec) selenium transferase from Shigella flexneri.